A 177-amino-acid chain; its full sequence is Large ribosomal subunit protein uL6 (177 aa).

A disordered region spans residues 151-177; it reads YRPPEPYKGKGIRYSDEHVVRKEAKKK. Positions 155-177 are enriched in basic and acidic residues; the sequence is EPYKGKGIRYSDEHVVRKEAKKK.

Belongs to the universal ribosomal protein uL6 family. Part of the 50S ribosomal subunit.

Functionally, this protein binds to the 23S rRNA, and is important in its secondary structure. It is located near the subunit interface in the base of the L7/L12 stalk, and near the tRNA binding site of the peptidyltransferase center. This Psychrobacter sp. (strain PRwf-1) protein is Large ribosomal subunit protein uL6.